Here is a 505-residue protein sequence, read N- to C-terminus: Glycerol kinase (505 aa).

T13 is a binding site for ADP. ATP contacts are provided by T13, T14, and S15. T13 provides a ligand contact to sn-glycerol 3-phosphate. Residue R17 participates in ADP binding. Positions 83, 84, 135, and 247 each coordinate sn-glycerol 3-phosphate. Glycerol-binding residues include R83, E84, Y135, D247, and Q248. T269 and G313 together coordinate ADP. 4 residues coordinate ATP: T269, G313, Q317, and G414. Positions 414 and 418 each coordinate ADP.

Belongs to the FGGY kinase family.

It carries out the reaction glycerol + ATP = sn-glycerol 3-phosphate + ADP + H(+). Its pathway is polyol metabolism; glycerol degradation via glycerol kinase pathway; sn-glycerol 3-phosphate from glycerol: step 1/1. With respect to regulation, inhibited by fructose 1,6-bisphosphate (FBP). Key enzyme in the regulation of glycerol uptake and metabolism. Catalyzes the phosphorylation of glycerol to yield sn-glycerol 3-phosphate. The chain is Glycerol kinase from Clavibacter michiganensis subsp. michiganensis (strain NCPPB 382).